The primary structure comprises 195 residues: UMP-CMP kinase (195 aa).

17-22 (GSGKGT) serves as a coordination point for ATP. An NMP region spans residues 37-66 (SAGDLLRQEQQSGSKDGEMIATMIKNGEIV). Residues Arg-43, 64-66 (EIV), and 91-94 (GFPR) each bind a ribonucleoside 5'-phosphate. Asn-98 is a binding site for CMP. The LID stretch occupies residues 131–141 (KRGESSGRSDD). Arg-132 is a binding site for ATP. The a ribonucleoside 5'-phosphate site is built by Arg-138 and Arg-149. An ATP-binding site is contributed by Arg-177.

Belongs to the adenylate kinase family. UMP-CMP kinase subfamily. Monomer. Requires Mg(2+) as cofactor.

It localises to the cytoplasm. Its subcellular location is the nucleus. It carries out the reaction CMP + ATP = CDP + ADP. The catalysed reaction is dCMP + ATP = dCDP + ADP. It catalyses the reaction UMP + ATP = UDP + ADP. Functionally, catalyzes the phosphorylation of pyrimidine nucleoside monophosphates at the expense of ATP. Plays an important role in de novo pyrimidine nucleotide biosynthesis. Has preference for UMP and CMP as phosphate acceptors. The sequence is that of UMP-CMP kinase from Dictyostelium discoideum (Social amoeba).